Consider the following 40-residue polypeptide: Photosystem II reaction center protein J (40 aa).

The chain crosses the membrane as a helical span at residues 8–28; it reads IPLWIIGTVAGIPVIGLIGIF.

It belongs to the PsbJ family. PSII is composed of 1 copy each of membrane proteins PsbA, PsbB, PsbC, PsbD, PsbE, PsbF, PsbH, PsbI, PsbJ, PsbK, PsbL, PsbM, PsbT, PsbX, PsbY, PsbZ, Psb30/Ycf12, at least 3 peripheral proteins of the oxygen-evolving complex and a large number of cofactors. It forms dimeric complexes.

The protein localises to the plastid. Its subcellular location is the chloroplast thylakoid membrane. Functionally, one of the components of the core complex of photosystem II (PSII). PSII is a light-driven water:plastoquinone oxidoreductase that uses light energy to abstract electrons from H(2)O, generating O(2) and a proton gradient subsequently used for ATP formation. It consists of a core antenna complex that captures photons, and an electron transfer chain that converts photonic excitation into a charge separation. This is Photosystem II reaction center protein J from Pelargonium hortorum (Common geranium).